Consider the following 500-residue polypeptide: Probable cytochrome P450 514A2 (500 aa).

The chain crosses the membrane as a helical span at residues Ile-4 to Phe-24. Cys-446 contributes to the heme binding site.

The protein belongs to the cytochrome P450 family. Heme serves as cofactor.

It localises to the membrane. In Dictyostelium discoideum (Social amoeba), this protein is Probable cytochrome P450 514A2 (cyp514A2).